Here is a 357-residue protein sequence, read N- to C-terminus: Uroporphyrinogen decarboxylase (357 aa).

Residues 30–34, Asp79, Tyr154, Ser209, and His336 each bind substrate; that span reads RQAGR.

It belongs to the uroporphyrinogen decarboxylase family. As to quaternary structure, homodimer.

The protein resides in the cytoplasm. The enzyme catalyses uroporphyrinogen III + 4 H(+) = coproporphyrinogen III + 4 CO2. It functions in the pathway porphyrin-containing compound metabolism; protoporphyrin-IX biosynthesis; coproporphyrinogen-III from 5-aminolevulinate: step 4/4. Catalyzes the decarboxylation of four acetate groups of uroporphyrinogen-III to yield coproporphyrinogen-III. The chain is Uroporphyrinogen decarboxylase from Mycobacterium bovis (strain ATCC BAA-935 / AF2122/97).